Consider the following 142-residue polypeptide: MLGLHVGTLISLFLCILLEPIEGSLMQPCQPINQTVSLEKEGCPTCLVIRAPICSGHCVTKEPVFKSPFSTVYQHVCTYRDVRYEMIRLPDCPPWSDPHVTYPVALSCDCSLCNMDTSDCTIESLQPDFCITQRVLTDGDMW.

The first 23 residues, 1–23 (MLGLHVGTLISLFLCILLEPIEG), serve as a signal peptide directing secretion. Intrachain disulfides connect Cys29/Cys77, Cys43/Cys92, Cys46/Cys130, Cys54/Cys108, Cys58/Cys110, and Cys113/Cys120. The N-linked (GlcNAc...) asparagine glycan is linked to Asn33.

Belongs to the glycoprotein hormones subunit beta family. In terms of assembly, heterodimer of an alpha and a beta chain.

Its subcellular location is the secreted. Involved in gametogenesis and steroidogenesis. This chain is Gonadotropin subunit beta-2 (cgbb), found in Oncorhynchus tshawytscha (Chinook salmon).